The sequence spans 530 residues: UDP-glucuronosyltransferase 2B17 (530 aa).

Residues 1-23 (MSLKWMSVFLLMQLSCYFSSGSC) form the signal peptide. N-linked (GlcNAc...) asparagine glycosylation occurs at asparagine 65. Lysine 136 bears the N6-succinyllysine mark. Asparagine 316 and asparagine 483 each carry an N-linked (GlcNAc...) asparagine glycan. The helical transmembrane segment at 495 to 515 (IAFLLACVATMIFMITKCCLF) threads the bilayer.

Belongs to the UDP-glycosyltransferase family. In terms of tissue distribution, expressed in various tissues including the liver, kidney, testis, uterus, placenta, mammary gland, adrenal gland, skin and prostate.

The protein resides in the endoplasmic reticulum membrane. It carries out the reaction glucuronate acceptor + UDP-alpha-D-glucuronate = acceptor beta-D-glucuronoside + UDP + H(+). The enzyme catalyses 17alpha-estradiol + UDP-alpha-D-glucuronate = 17alpha-estradiol 3-O-(beta-D-glucuronate) + UDP + H(+). The catalysed reaction is 17alpha-estradiol + UDP-alpha-D-glucuronate = 17alpha-estradiol 17-O-(beta-D-glucuronate) + UDP + H(+). It catalyses the reaction 17beta-estradiol + UDP-alpha-D-glucuronate = 17beta-estradiol 17-O-(beta-D-glucuronate) + UDP + H(+). It carries out the reaction 17beta-hydroxy-5alpha-androstan-3-one + UDP-alpha-D-glucuronate = 5alpha-dihydrotestosterone 17-O-(beta-D-glucuronate) + UDP + H(+). The enzyme catalyses testosterone + UDP-alpha-D-glucuronate = testosterone 17-O-(beta-D-glucuronate) + UDP + H(+). UDP-glucuronosyltransferase (UGT) that catalyzes phase II biotransformation reactions in which lipophilic substrates are conjugated with glucuronic acid to increase the metabolite's water solubility, thereby facilitating excretion into either the urine or bile. Catalyzes the glucuronidation of endogenous steroid hormones such as androgens (epitestosterone, androsterone) and estrogens (estradiol, epiestradiol). The protein is UDP-glucuronosyltransferase 2B17 of Homo sapiens (Human).